Reading from the N-terminus, the 700-residue chain is Inhibitor of carbonic anhydrase (700 aa).

Residues 1–19 (MRLLICALLCLGTLGLCLA) form the signal peptide. 2 consecutive Transferrin-like domains span residues 25–347 (IRWC…NLKR) and 355–685 (VKWC…NFRQ). 16 cysteine pairs are disulfide-bonded: cysteine 28/cysteine 67, cysteine 38/cysteine 58, cysteine 137/cysteine 213, cysteine 172/cysteine 188, cysteine 175/cysteine 198, cysteine 185/cysteine 196, cysteine 246/cysteine 260, cysteine 358/cysteine 390, cysteine 368/cysteine 381, cysteine 415/cysteine 695, cysteine 438/cysteine 658, cysteine 470/cysteine 545, cysteine 494/cysteine 686, cysteine 504/cysteine 518, cysteine 515/cysteine 528, and cysteine 585/cysteine 599. A glycan (N-linked (GlcNAc...) asparagine) is linked at asparagine 664.

This sequence belongs to the transferrin family. Monomer. Interacts (via transferrin-like domain 2) with CA2. Post-translationally, N-glycosylated. Detected in blood plasma, heart, kidney, liver, colon, lung, spleen, pancreas and testis (at protein level).

It is found in the secreted. Its function is as follows. Inhibitor for carbonic anhydrase 2 (CA2). Does not bind iron ions. This chain is Inhibitor of carbonic anhydrase, found in Mus musculus (Mouse).